We begin with the raw amino-acid sequence, 77 residues long: Acyl carrier protein (77 aa).

Residues 2-77 enclose the Carrier domain; it reads SDVAEKVKKI…DAIAYIEEKK (76 aa). An O-(pantetheine 4'-phosphoryl)serine modification is found at Ser37.

The protein belongs to the acyl carrier protein (ACP) family. 4'-phosphopantetheine is transferred from CoA to a specific serine of apo-ACP by AcpS. This modification is essential for activity because fatty acids are bound in thioester linkage to the sulfhydryl of the prosthetic group.

The protein localises to the cytoplasm. It functions in the pathway lipid metabolism; fatty acid biosynthesis. Functionally, carrier of the growing fatty acid chain in fatty acid biosynthesis. In Desulfovibrio desulfuricans (strain ATCC 27774 / DSM 6949 / MB), this protein is Acyl carrier protein.